Consider the following 156-residue polypeptide: ATP synthase subunit b (156 aa).

A helical membrane pass occupies residues 7–29 (LLGQAIAFFFFVTFCMKYVWPPL).

It belongs to the ATPase B chain family. F-type ATPases have 2 components, F(1) - the catalytic core - and F(0) - the membrane proton channel. F(1) has five subunits: alpha(3), beta(3), gamma(1), delta(1), epsilon(1). F(0) has three main subunits: a(1), b(2) and c(10-14). The alpha and beta chains form an alternating ring which encloses part of the gamma chain. F(1) is attached to F(0) by a central stalk formed by the gamma and epsilon chains, while a peripheral stalk is formed by the delta and b chains.

The protein localises to the cell inner membrane. In terms of biological role, f(1)F(0) ATP synthase produces ATP from ADP in the presence of a proton or sodium gradient. F-type ATPases consist of two structural domains, F(1) containing the extramembraneous catalytic core and F(0) containing the membrane proton channel, linked together by a central stalk and a peripheral stalk. During catalysis, ATP synthesis in the catalytic domain of F(1) is coupled via a rotary mechanism of the central stalk subunits to proton translocation. Its function is as follows. Component of the F(0) channel, it forms part of the peripheral stalk, linking F(1) to F(0). This is ATP synthase subunit b from Photobacterium profundum (strain SS9).